The primary structure comprises 569 residues: Proline--tRNA ligase (569 aa).

It belongs to the class-II aminoacyl-tRNA synthetase family. ProS type 1 subfamily. As to quaternary structure, homodimer.

It is found in the cytoplasm. It carries out the reaction tRNA(Pro) + L-proline + ATP = L-prolyl-tRNA(Pro) + AMP + diphosphate. Its function is as follows. Catalyzes the attachment of proline to tRNA(Pro) in a two-step reaction: proline is first activated by ATP to form Pro-AMP and then transferred to the acceptor end of tRNA(Pro). As ProRS can inadvertently accommodate and process non-cognate amino acids such as alanine and cysteine, to avoid such errors it has two additional distinct editing activities against alanine. One activity is designated as 'pretransfer' editing and involves the tRNA(Pro)-independent hydrolysis of activated Ala-AMP. The other activity is designated 'posttransfer' editing and involves deacylation of mischarged Ala-tRNA(Pro). The misacylated Cys-tRNA(Pro) is not edited by ProRS. The chain is Proline--tRNA ligase from Legionella pneumophila (strain Lens).